A 704-amino-acid polypeptide reads, in one-letter code: DNA ligase (704 aa).

Residues 43–47 (DADYD), 92–93 (SL), and glutamate 124 contribute to the NAD(+) site. Lysine 126 acts as the N6-AMP-lysine intermediate in catalysis. NAD(+) is bound by residues arginine 147, glutamate 182, lysine 298, and lysine 322. 4 residues coordinate Zn(2+): cysteine 427, cysteine 430, cysteine 445, and cysteine 451. Residues 625 to 704 (PVASPVAGRI…DGWLRLIGDA (80 aa)) enclose the BRCT domain.

The protein belongs to the NAD-dependent DNA ligase family. LigA subfamily. It depends on Mg(2+) as a cofactor. Requires Mn(2+) as cofactor.

The enzyme catalyses NAD(+) + (deoxyribonucleotide)n-3'-hydroxyl + 5'-phospho-(deoxyribonucleotide)m = (deoxyribonucleotide)n+m + AMP + beta-nicotinamide D-nucleotide.. In terms of biological role, DNA ligase that catalyzes the formation of phosphodiester linkages between 5'-phosphoryl and 3'-hydroxyl groups in double-stranded DNA using NAD as a coenzyme and as the energy source for the reaction. It is essential for DNA replication and repair of damaged DNA. This Cereibacter sphaeroides (strain KD131 / KCTC 12085) (Rhodobacter sphaeroides) protein is DNA ligase.